Consider the following 130-residue polypeptide: Chorion class B protein PC10 (130 aa).

Residues 1–22 are left arm; that stretch reads GAWNGRLGCGCGGIAPAAELAA. Residues 23 to 93 form a central domain region; it reads SYGGGLGVAS…GNGALGITAE (71 aa). The interval 94 to 130 is right arm (Gly-rich tandem repeats); that stretch reads RGYGAGIGYEGLGLGYGAGIGYKGYGLGGCGCGCGRL.

The protein belongs to the chorion protein family.

This protein is one of many from the eggshell of the silk moth. The polypeptide is Chorion class B protein PC10 (Antheraea polyphemus (Polyphemus moth)).